The sequence spans 247 residues: RNA-free ribonuclease P (247 aa).

Belongs to the HARP family.

The enzyme catalyses Endonucleolytic cleavage of RNA, removing 5'-extranucleotides from tRNA precursor.. In terms of biological role, RNA-free RNase P that catalyzes the removal of the 5'-leader sequence from pre-tRNA to produce the mature 5'-terminus. This is RNA-free ribonuclease P from Methanosarcina mazei (strain ATCC BAA-159 / DSM 3647 / Goe1 / Go1 / JCM 11833 / OCM 88) (Methanosarcina frisia).